Here is a 638-residue protein sequence, read N- to C-terminus: 1-deoxy-D-xylulose-5-phosphate synthase (638 aa).

Thiamine diphosphate contacts are provided by residues histidine 75 and 116–118; that span reads AHS. A Mg(2+)-binding site is contributed by aspartate 147. Residues 148-149, asparagine 177, tyrosine 288, and glutamate 370 each bind thiamine diphosphate; that span reads GA. A Mg(2+)-binding site is contributed by asparagine 177.

This sequence belongs to the transketolase family. DXPS subfamily. As to quaternary structure, homodimer. It depends on Mg(2+) as a cofactor. Thiamine diphosphate serves as cofactor.

The catalysed reaction is D-glyceraldehyde 3-phosphate + pyruvate + H(+) = 1-deoxy-D-xylulose 5-phosphate + CO2. It functions in the pathway metabolic intermediate biosynthesis; 1-deoxy-D-xylulose 5-phosphate biosynthesis; 1-deoxy-D-xylulose 5-phosphate from D-glyceraldehyde 3-phosphate and pyruvate: step 1/1. Functionally, catalyzes the acyloin condensation reaction between C atoms 2 and 3 of pyruvate and glyceraldehyde 3-phosphate to yield 1-deoxy-D-xylulose-5-phosphate (DXP). The protein is 1-deoxy-D-xylulose-5-phosphate synthase of Cupriavidus pinatubonensis (strain JMP 134 / LMG 1197) (Cupriavidus necator (strain JMP 134)).